The following is a 452-amino-acid chain: tRNA modification GTPase MnmE (452 aa).

3 residues coordinate (6S)-5-formyl-5,6,7,8-tetrahydrofolate: arginine 22, glutamate 80, and lysine 119. The TrmE-type G domain occupies 213–375 (GVRTVIVGKP…LENKIYEKFF (163 aa)). Asparagine 223 provides a ligand contact to K(+). Residues 223–228 (NSGKST), 242–248 (TDIPGTT), and 267–270 (DTAG) each bind GTP. Serine 227 contributes to the Mg(2+) binding site. K(+) contacts are provided by threonine 242, isoleucine 244, and threonine 247. Residue threonine 248 coordinates Mg(2+). Lysine 452 provides a ligand contact to (6S)-5-formyl-5,6,7,8-tetrahydrofolate.

Belongs to the TRAFAC class TrmE-Era-EngA-EngB-Septin-like GTPase superfamily. TrmE GTPase family. Homodimer. Heterotetramer of two MnmE and two MnmG subunits. K(+) is required as a cofactor.

The protein resides in the cytoplasm. Functionally, exhibits a very high intrinsic GTPase hydrolysis rate. Involved in the addition of a carboxymethylaminomethyl (cmnm) group at the wobble position (U34) of certain tRNAs, forming tRNA-cmnm(5)s(2)U34. The polypeptide is tRNA modification GTPase MnmE (Petrotoga mobilis (strain DSM 10674 / SJ95)).